Here is a 434-residue protein sequence, read N- to C-terminus: Glycylpeptide N-tetradecanoyltransferase 1 (434 aa).

The segment at 1-24 (MADNNSPPGSVEQKADQIVEANPL) is disordered. A2 carries the N-acetylalanine modification. Tetradecanoyl-CoA is bound by residues 48-51 (HKFW), 184-186 (LCV), and 192-196 (SKRLA). The active-site Proton acceptor; via carboxylate is L434.

The protein belongs to the NMT family. In terms of tissue distribution, expressed ubiquitously, with higher levels in young tissues (at protein level).

The protein localises to the cytoplasm. The enzyme catalyses N-terminal glycyl-[protein] + tetradecanoyl-CoA = N-tetradecanoylglycyl-[protein] + CoA + H(+). Adds a myristoyl group to the N-terminal glycine residue of certain cellular proteins. Can also use decanoyl-CoA and lauroyl-CoA as substrates. The chain is Glycylpeptide N-tetradecanoyltransferase 1 (NMT1) from Arabidopsis thaliana (Mouse-ear cress).